The following is a 593-amino-acid chain: Copine-5 (593 aa).

The region spanning 2–134 (EQPEDMASLS…SSGSRLEKPL (133 aa)) is the C2 1 domain. Ser19 is subject to Phosphoserine. Ca(2+) is bound by residues Asp38, Asp44, Asp98, Asp100, Ser103, Lys108, and Asp110. Ser103 carries the phosphoserine modification. The residue at position 140 (Ser140) is a Phosphoserine. The C2 2 domain maps to 161 to 284 (KCGTIILSAE…ARGQSQFNIY (124 aa)). Residues Asp192, Asp198, Asp254, Asp256, and Asp262 each contribute to the Ca(2+) site. The region spanning 328–554 (NFTVAIDFTA…DVLAEIPDQL (227 aa)) is the VWFA domain. The segment at 562 to 593 (GIRPRPPPAAPAQSPPQSPAHSPPGSPVHTHI) is disordered. A compositionally biased stretch (pro residues) spans 565–587 (PRPPPAAPAQSPPQSPAHSPPGS).

It belongs to the copine family. Requires Ca(2+) as cofactor. As to expression, expressed in the cerebra and cerebellum of newborn brain. Expressed in the eye, lung and muscles but weakly expressed in the adult brain (at protein level).

It is found in the perikaryon. It localises to the cell projection. Its function is as follows. Probable calcium-dependent phospholipid-binding protein that may play a role in calcium-mediated intracellular processes. Plays a role in dendrite formation by melanocytes. The sequence is that of Copine-5 from Mus musculus (Mouse).